Reading from the N-terminus, the 463-residue chain is L-2-hydroxyglutarate dehydrogenase, mitochondrial (463 aa).

The transit peptide at M1–I51 directs the protein to the mitochondrion. An N6-acetyllysine mark is found at K104, K155, and K173.

The protein belongs to the L2HGDH family. FAD is required as a cofactor. In terms of tissue distribution, widely expressed. Highly expressed in brain, testis and muscle. Expressed to a lower extent in lymphocytes, fibroblasts, keratinocytes, placenta, bladder, small intestine, liver and bone marrow.

It localises to the mitochondrion. The enzyme catalyses (S)-2-hydroxyglutarate + A = 2-oxoglutarate + AH2. The polypeptide is L-2-hydroxyglutarate dehydrogenase, mitochondrial (L2HGDH) (Homo sapiens (Human)).